The sequence spans 68 residues: Large ribosomal subunit protein bL35 (68 aa).

The protein belongs to the bacterial ribosomal protein bL35 family.

The chain is Large ribosomal subunit protein bL35 from Rickettsia conorii (strain ATCC VR-613 / Malish 7).